The following is a 234-amino-acid chain: Phosphatidylinositol phosphate synthase (234 aa).

Transmembrane regions (helical) follow at residues 28–48 (LTPD…ALVL) and 54–70 (LFPG…FDML). 31–34 (DAVT) provides a ligand contact to a CDP-1,2-diacyl-sn-glycerol. Mg(2+) contacts are provided by D68 and D71. A CDP-1,2-diacyl-sn-glycerol-binding residues include G72, R76, and T82. 2 residues coordinate Mg(2+): D89 and D93. 4 consecutive transmembrane segments (helical) span residues 91-110 (ACDR…WVAF), 116-134 (LLVV…ISYI), 155-173 (RLII…FIAW), and 179-197 (VAMW…QRLY). The active-site Proton acceptor is D93. The segment at 211-234 (PSAPVRDDDAQGHPRSGDPGKTQR) is disordered. Residues 215–228 (VRDDDAQGHPRSGD) show a composition bias toward basic and acidic residues.

It belongs to the CDP-alcohol phosphatidyltransferase class-I family. As to quaternary structure, homodimer. The cofactor is Mg(2+).

The protein resides in the cell membrane. The enzyme catalyses a CDP-1,2-diacyl-sn-glycerol + 1D-myo-inositol 3-phosphate = a 1,2-diacyl-sn-glycero-3-phospho-(1D-myo-inositol-3-phosphate) + CMP + H(+). It catalyses the reaction 1,2-di-(9Z-octadecenoyl)-sn-glycero-3-cytidine-5'-diphosphate + 1D-myo-inositol 3-phosphate = 1,2-di-(9Z-octadecenoyl)-sn-glycero-3-phospho-(1D-myo-inositol-3-phosphate) + CMP + H(+). It functions in the pathway phospholipid metabolism; phosphatidylinositol phosphate biosynthesis. Its function is as follows. Catalyzes the conjugation of the 1'-hydroxyl group of D-myo-inositol-3-phosphate (also named L-myo-inositol-1-phosphate) with a lipid tail of cytidine diphosphate diacylglycerol (CDP-DAG), forming phosphatidylinositol phosphate (PIP) and CMP. PIP is a precursor of phosphatidylinositol (PI) which is an essential lipid for mycobacteria required for formation of their cell wall. This chain is Phosphatidylinositol phosphate synthase, found in Mycobacterium marinum (strain ATCC BAA-535 / M).